Consider the following 164-residue polypeptide: R-phycoerythrin alpha chain (164 aa).

(2R,3E)-phycoerythrobilin is bound by residues C82 and C139.

Belongs to the phycobiliprotein family. As to quaternary structure, heterodimer of an alpha and a beta chain. In terms of processing, contains two covalently linked bilin chromophores.

It localises to the plastid. Its subcellular location is the chloroplast thylakoid membrane. Its function is as follows. Light-harvesting photosynthetic bile pigment-protein from the phycobiliprotein complex. This chain is R-phycoerythrin alpha chain (cpeA), found in Lophosiphonia boldii (Red alga).